The sequence spans 498 residues: Guanosine-5'-triphosphate,3'-diphosphate pyrophosphatase (498 aa).

This sequence belongs to the GppA/Ppx family. GppA subfamily.

The catalysed reaction is guanosine 3'-diphosphate 5'-triphosphate + H2O = guanosine 3',5'-bis(diphosphate) + phosphate + H(+). Its pathway is purine metabolism; ppGpp biosynthesis; ppGpp from GTP: step 2/2. Its function is as follows. Catalyzes the conversion of pppGpp to ppGpp. Guanosine pentaphosphate (pppGpp) is a cytoplasmic signaling molecule which together with ppGpp controls the 'stringent response', an adaptive process that allows bacteria to respond to amino acid starvation, resulting in the coordinated regulation of numerous cellular activities. The polypeptide is Guanosine-5'-triphosphate,3'-diphosphate pyrophosphatase (Yersinia pseudotuberculosis serotype O:1b (strain IP 31758)).